We begin with the raw amino-acid sequence, 445 residues long: ATP-dependent protease ATPase subunit HslU (445 aa).

Residues V18, 60–65 (GVGKTE), D254, E319, and R391 each bind ATP.

It belongs to the ClpX chaperone family. HslU subfamily. In terms of assembly, a double ring-shaped homohexamer of HslV is capped on each side by a ring-shaped HslU homohexamer. The assembly of the HslU/HslV complex is dependent on binding of ATP.

The protein localises to the cytoplasm. Functionally, ATPase subunit of a proteasome-like degradation complex; this subunit has chaperone activity. The binding of ATP and its subsequent hydrolysis by HslU are essential for unfolding of protein substrates subsequently hydrolyzed by HslV. HslU recognizes the N-terminal part of its protein substrates and unfolds these before they are guided to HslV for hydrolysis. This chain is ATP-dependent protease ATPase subunit HslU, found in Alcanivorax borkumensis (strain ATCC 700651 / DSM 11573 / NCIMB 13689 / SK2).